Consider the following 71-residue polypeptide: MINKNISIQINGEPFNCSEPLSLQFLLNYLDFNSERIAIEINSTLLPERLFHSTYINDQDKVEIITIVGGG.

This sequence belongs to the ycf40 family.

Its subcellular location is the plastid. The protein localises to the chloroplast. This is an uncharacterized protein from Porphyra purpurea (Red seaweed).